The primary structure comprises 356 residues: DNA polymerase IV (356 aa).

One can recognise a UmuC domain in the interval 6–187; it reads IIHIDMDYFF…LDIGDFPGVG (182 aa). Mg(2+)-binding residues include Asp-10 and Asp-105. The active site involves Glu-106.

The protein belongs to the DNA polymerase type-Y family. In terms of assembly, monomer. Mg(2+) serves as cofactor.

The protein localises to the cytoplasm. The catalysed reaction is DNA(n) + a 2'-deoxyribonucleoside 5'-triphosphate = DNA(n+1) + diphosphate. Its function is as follows. Poorly processive, error-prone DNA polymerase involved in untargeted mutagenesis. Copies undamaged DNA at stalled replication forks, which arise in vivo from mismatched or misaligned primer ends. These misaligned primers can be extended by PolIV. Exhibits no 3'-5' exonuclease (proofreading) activity. May be involved in translesional synthesis, in conjunction with the beta clamp from PolIII. This is DNA polymerase IV from Staphylococcus aureus (strain Mu50 / ATCC 700699).